The chain runs to 479 residues: Ribulose bisphosphate carboxylase large chain (479 aa).

The propeptide occupies 1 to 2 (MS). Substrate contacts are provided by Asn-123 and Thr-173. The active-site Proton acceptor is the Lys-175. Position 177 (Lys-177) interacts with substrate. The Mg(2+) site is built by Lys-201, Asp-203, and Glu-204. The residue at position 201 (Lys-201) is an N6-carboxylysine. Ser-208 is modified (phosphoserine). Catalysis depends on His-294, which acts as the Proton acceptor. Arg-295 and His-327 together coordinate substrate. Phosphothreonine is present on Thr-330. Ser-379 provides a ligand contact to substrate.

Belongs to the RuBisCO large chain family. Type I subfamily. Heterohexadecamer of 8 large chains and 8 small chains; disulfide-linked. The disulfide link is formed within the large subunit homodimers. The cofactor is Mg(2+). The disulfide bond which can form in the large chain dimeric partners within the hexadecamer appears to be associated with oxidative stress and protein turnover.

Its subcellular location is the plastid. The protein localises to the chloroplast. It carries out the reaction 2 (2R)-3-phosphoglycerate + 2 H(+) = D-ribulose 1,5-bisphosphate + CO2 + H2O. The enzyme catalyses D-ribulose 1,5-bisphosphate + O2 = 2-phosphoglycolate + (2R)-3-phosphoglycerate + 2 H(+). Functionally, ruBisCO catalyzes two reactions: the carboxylation of D-ribulose 1,5-bisphosphate, the primary event in carbon dioxide fixation, as well as the oxidative fragmentation of the pentose substrate in the photorespiration process. Both reactions occur simultaneously and in competition at the same active site. The protein is Ribulose bisphosphate carboxylase large chain of Arabis hirsuta (Hairy rock-cress).